The primary structure comprises 215 residues: Large ribosomal subunit protein bL25 (215 aa).

Polar residues-rich tracts occupy residues 1-19 and 206-215; these read MAKS…NTGK and ENKTAATESE. 2 disordered regions span residues 1 to 29 and 190 to 215; these read MAKS…RRDG and AKYA…TESE.

The protein belongs to the bacterial ribosomal protein bL25 family. CTC subfamily. As to quaternary structure, part of the 50S ribosomal subunit; part of the 5S rRNA/L5/L18/L25 subcomplex. Contacts the 5S rRNA. Binds to the 5S rRNA independently of L5 and L18.

Functionally, this is one of the proteins that binds to the 5S RNA in the ribosome where it forms part of the central protuberance. The protein is Large ribosomal subunit protein bL25 of Mycobacterium leprae (strain TN).